The chain runs to 95 residues: MLHTLHRSPWLTDFAALLRLLSEGDELLLLQDGVTAAVDGNRYLESLRNAPIKVYALNEDLIARGLTGRISNDIIPIDYTDFVRLTVKHSSQMAW.

This sequence belongs to the DsrH/TusB family. As to quaternary structure, heterohexamer, formed by a dimer of trimers. The hexameric TusBCD complex contains 2 copies each of TusB, TusC and TusD. The TusBCD complex interacts with TusE.

Its subcellular location is the cytoplasm. Functionally, part of a sulfur-relay system required for 2-thiolation of 5-methylaminomethyl-2-thiouridine (mnm(5)s(2)U) at tRNA wobble positions. The polypeptide is Protein TusB (Escherichia coli O45:K1 (strain S88 / ExPEC)).